The following is a 188-amino-acid chain: Acireductone dioxygenase (188 aa).

Residues 1–20 (MSRLRIFADSNPTTPHFDSR) form a disordered region. Residues H97, H99, E103, and H141 each coordinate Fe(2+). Ni(2+)-binding residues include H97, H99, E103, and H141.

The protein belongs to the acireductone dioxygenase (ARD) family. In terms of assembly, monomer. Fe(2+) serves as cofactor. Ni(2+) is required as a cofactor.

It carries out the reaction 1,2-dihydroxy-5-(methylsulfanyl)pent-1-en-3-one + O2 = 3-(methylsulfanyl)propanoate + CO + formate + 2 H(+). The catalysed reaction is 1,2-dihydroxy-5-(methylsulfanyl)pent-1-en-3-one + O2 = 4-methylsulfanyl-2-oxobutanoate + formate + 2 H(+). The protein operates within amino-acid biosynthesis; L-methionine biosynthesis via salvage pathway; L-methionine from S-methyl-5-thio-alpha-D-ribose 1-phosphate: step 5/6. Catalyzes 2 different reactions between oxygen and the acireductone 1,2-dihydroxy-3-keto-5-methylthiopentene (DHK-MTPene) depending upon the metal bound in the active site. Fe-containing acireductone dioxygenase (Fe-ARD) produces formate and 2-keto-4-methylthiobutyrate (KMTB), the alpha-ketoacid precursor of methionine in the methionine recycle pathway. Ni-containing acireductone dioxygenase (Ni-ARD) produces methylthiopropionate, carbon monoxide and formate, and does not lie on the methionine recycle pathway. The sequence is that of Acireductone dioxygenase from Xanthomonas campestris pv. campestris (strain 8004).